We begin with the raw amino-acid sequence, 138 residues long: Large ribosomal subunit protein bL17 (138 aa).

Positions 118–138 (RDEDAKGKDSGPSQDGAAEAA) are disordered.

The protein belongs to the bacterial ribosomal protein bL17 family. Part of the 50S ribosomal subunit. Contacts protein L32.

The sequence is that of Large ribosomal subunit protein bL17 from Rhodopseudomonas palustris (strain HaA2).